We begin with the raw amino-acid sequence, 968 residues long: RNA polymerase-associated protein RapA (968 aa).

The 171-residue stretch at 164-334 folds into the Helicase ATP-binding domain; the sequence is DVGRRHAPRV…FARLRLLDPN (171 aa). ATP is bound at residue 177–184; sequence DEVGLGKT. The DEAH box motif lies at 280-283; sequence DEAH. Positions 490–685 constitute a Helicase C-terminal domain; the sequence is RVEWLMGYLT…ALKAQLEQGR (196 aa).

The protein belongs to the SNF2/RAD54 helicase family. RapA subfamily. In terms of assembly, interacts with the RNAP. Has a higher affinity for the core RNAP than for the holoenzyme. Its ATPase activity is stimulated by binding to RNAP.

In terms of biological role, transcription regulator that activates transcription by stimulating RNA polymerase (RNAP) recycling in case of stress conditions such as supercoiled DNA or high salt concentrations. Probably acts by releasing the RNAP, when it is trapped or immobilized on tightly supercoiled DNA. Does not activate transcription on linear DNA. Probably not involved in DNA repair. The protein is RNA polymerase-associated protein RapA of Salmonella typhimurium (strain LT2 / SGSC1412 / ATCC 700720).